A 587-amino-acid chain; its full sequence is Phosphatidylinositol-3-phosphatase SAC1 (587 aa).

The Cytoplasmic segment spans residues 1–520 (MATAAYEQLK…SPLSVPRDWK (520 aa)). The SAC domain maps to 122–451 (LNHVLNVDGF…ANACAKQYAG (330 aa)). The interval 452–587 (TGALKTDFTR…PRLVQKEKID (136 aa)) is essential for phosphatidylinositol-4-phosphate phosphatase activity. N6-acetyllysine is present on Lys456. A helical membrane pass occupies residues 521–541 (FLALPIIMVVAFSMCIICLLM). Topologically, residues 542–548 (AGDTWTE) are lumenal. A helical membrane pass occupies residues 549 to 569 (TLAYVLFWGVASIGTFFIILY). Residues 570–587 (NGKDFVDAPRLVQKEKID) lie on the Cytoplasmic side of the membrane.

Interacts with TMEM39A. Interacts with SEC23A and SEC24A; this interaction is reduced in the absence of TMEM39A. Interacts with PLEKHA3 and VAPA and/or VAPB to form a ternary complex.

It localises to the endoplasmic reticulum membrane. The protein resides in the golgi apparatus membrane. It catalyses the reaction a 1,2-diacyl-sn-glycero-3-phospho-(1D-myo-inositol-3-phosphate) + H2O = a 1,2-diacyl-sn-glycero-3-phospho-(1D-myo-inositol) + phosphate. The catalysed reaction is a 1,2-diacyl-sn-glycero-3-phospho-(1D-myo-inositol 4-phosphate) + H2O = a 1,2-diacyl-sn-glycero-3-phospho-(1D-myo-inositol) + phosphate. Phosphoinositide phosphatase which catalyzes the hydrolysis of phosphatidylinositol 4-phosphate (PtdIns(4)P), phosphatidylinositol 3-phosphate (PtdIns(3)P) and has low activity towards phosphatidylinositol-3,5-bisphosphate (PtdIns(3,5)P2). Shows a very robust PtdIns(4)P phosphatase activity when it binds PtdIns(4)P in a 'cis' configuration in the cellular environment, with much less activity seen when it binds PtdIns(4)P in 'trans' configuration. PtdIns(4)P phosphatase activity (when it binds PtdIns(4)P in 'trans' configuration) is enhanced in the presence of PLEKHA3. This is Phosphatidylinositol-3-phosphatase SAC1 (SACM1L) from Pongo abelii (Sumatran orangutan).